A 358-amino-acid chain; its full sequence is Starch-binding domain-containing protein 1 (358 aa).

Over 1–6 the chain is Extracellular; the sequence is MGAVWS. The chain crosses the membrane as a helical span at residues 7-23; it reads ALLVGGGLAGALFVWLL. Over 24–358 the chain is Cytoplasmic; that stretch reads RGGPGDTGKD…KVVHAWWGIH (335 aa). Residues 30 to 42 show a composition bias toward basic and acidic residues; sequence TGKDGDAEQEKDA. Disordered stretches follow at residues 30–70 and 104–151; these read TGKD…QELV and SREV…SPMG. Low complexity predominate over residues 50-66; sequence PGGHQSGSSGLSPGPSG. Serine 65 is modified (phosphoserine). Residues 106-115 are compositionally biased toward basic and acidic residues; the sequence is EVCDNSREHV. Serine 117 carries the post-translational modification Phosphoserine. The span at 126-140 shows a compositional bias: polar residues; that stretch reads PATSETSNSRSYSEV. Residues serine 148, serine 175, serine 188, and serine 194 each carry the phosphoserine modification. Residues 200–206 carry the LIR motif; that stretch reads HEEWEMV. Phosphoserine occurs at positions 210, 211, and 220. Residues 258 to 357 form the CBM20 domain; it reads PAGSQQVSVR…DKVVHAWWGI (100 aa).

As to quaternary structure, interacts with the ATG8 family proteins GABARAP and GABARAPL1. Interacts with several glycogen-associated proteins, such as GYS2 (liver glycogen synthase), GDE (glycogen debranching enzyme), GBE1 (glycogen branching enzyme 1) and EPM2A (Laforin). Ubiquitinated, which leads to proteasomal degradation. As to expression, expressed at high level in skeletal and cardiac muscles. Moderately expressed in liver and placenta. No expression is found in pancreas, kidney or lung. Present in skeletal muscle, heart and placenta (at protein level).

It localises to the preautophagosomal structure membrane. It is found in the endoplasmic reticulum membrane. The protein localises to the cell membrane. Its subcellular location is the sarcolemma. The protein resides in the T-tubule. Functionally, acts as a cargo receptor for glycogen. Delivers its cargo to an autophagic pathway called glycophagy, resulting in the transport of glycogen to lysosomes. In Homo sapiens (Human), this protein is Starch-binding domain-containing protein 1.